The sequence spans 486 residues: Cytosol aminopeptidase (486 aa).

Zn(2+)-binding residues include Lys-249 and Asp-254. Lys-261 is a catalytic residue. Positions 272, 331, and 333 each coordinate Zn(2+). Arg-335 is a catalytic residue.

Belongs to the peptidase M17 family. Homohexamer. Zn(2+) serves as cofactor.

The protein resides in the cytoplasm. It catalyses the reaction Release of an N-terminal amino acid, Xaa-|-Yaa-, in which Xaa is preferably Leu, but may be other amino acids including Pro although not Arg or Lys, and Yaa may be Pro. Amino acid amides and methyl esters are also readily hydrolyzed, but rates on arylamides are exceedingly low.. The enzyme catalyses Release of N-terminal proline from a peptide.. Presumably involved in the processing and regular turnover of intracellular proteins. Catalyzes the removal of unsubstituted N-terminal amino acids from various peptides. In Encephalitozoon cuniculi (strain GB-M1) (Microsporidian parasite), this protein is Cytosol aminopeptidase.